A 495-amino-acid polypeptide reads, in one-letter code: Regulator of G-protein signaling 7 (495 aa).

A DEP domain is found at 37–112 (EKNGIPIRTV…DDGTFYRFQT (76 aa)). Serine 229 and serine 241 each carry phosphoserine. Positions 235–256 (NDIRSHSPTHTPTPETKPPTED) are disordered. Threonine 243 carries the post-translational modification Phosphothreonine. Residues 255-316 (EDELQQQIKY…LSDDTTFWEL (62 aa)) form the G protein gamma domain. The 116-residue stretch at 333–448 (GMDEALKDPV…IRSSAYQELL (116 aa)) folds into the RGS domain. Residue serine 434 is modified to Phosphoserine.

In terms of assembly, interacts with GNB5, forming the RGS7-GNB5 complex. Interacts with GPR158; promotes the GTPase activator activity of the RGS7-GNB5 complex in absence of glycine, in contrast GTPase activator activity of the RGS7-GNB5 complex is inhibited in presence of glycine. Interacts with GPR179. Interacts with PKD1; this prevents rapid proteasomal degradation. Interacts with RGS7BP, leading to regulate the subcellular location of the heterodimer formed with GNB5. Interacts (phosphorylated form) with 14-3-3 protein YWHAQ. Interacts with SNAPIN. Interacts with GNAI1. Interacts with GNAO1, GNAI3 and GNAZ. Post-translationally, palmitoylated. In terms of processing, ubiquitinated, leading to rapid proteasomal degradation. Phosphorylation and subsequent interaction with 14-3-3 proteins inhibits GAP activity.

The protein resides in the cytoplasm. It is found in the cytosol. The protein localises to the cell membrane. It localises to the membrane. GTPase activator component of the RGS7-GNB5 complex that regulates G protein-coupled receptor signaling cascades. The RGS7-GNB5 complex acts as an inhibitor signal transduction by promoting the GTPase activity of G protein alpha subunits, such as GNAO1, thereby driving them into their inactive GDP-bound form. May play a role in synaptic vesicle exocytosis. Glycine-dependent regulation of the RGS7-GNB5 complex by GPR158 affects mood and cognition via its ability to regulate neuronal excitability in L2/L3 pyramidal neurons of the prefrontal cortex. Modulates the activity of potassium channels that are activated by GNAO1 in response to muscarinic acetylcholine receptor M2/CHRM2 signaling. The protein is Regulator of G-protein signaling 7 (RGS7) of Homo sapiens (Human).